A 202-amino-acid polypeptide reads, in one-letter code: B-cell CLL/lymphoma 7 protein family member B (202 aa).

A disordered region spans residues 53–202 (DSKEKEKSKS…PAVPQTASES (150 aa)). The segment covering 90-99 (ENSNQSSVSD) has biased composition (polar residues). The segment covering 107-123 (SSTNSSPSPQQSESLSP) has biased composition (low complexity). Phosphoserine is present on residues S114, S118, S120, S122, S127, S148, and S152.

The protein belongs to the BCL7 family.

In terms of biological role, positive regulator of apoptosis. Plays a role in the Wnt signaling pathway, negatively regulating the expression of Wnt signaling components CTNNB1 and HMGA1. Involved in cell cycle progression, maintenance of the nuclear structure and stem cell differentiation. May play a role in lung tumor development or progression. The chain is B-cell CLL/lymphoma 7 protein family member B (BCL7B) from Bos taurus (Bovine).